A 540-amino-acid polypeptide reads, in one-letter code: Sterol 14-alpha demethylase (540 aa).

Residues 41–61 traverse the membrane as a helical segment; the sequence is PLFLVSGFLGVCVAYAVANII. Position 485 (Cys-485) interacts with heme.

Belongs to the cytochrome P450 family. The cofactor is heme.

Its subcellular location is the membrane. It catalyses the reaction a 14alpha-methyl steroid + 3 reduced [NADPH--hemoprotein reductase] + 3 O2 = a Delta(14) steroid + formate + 3 oxidized [NADPH--hemoprotein reductase] + 4 H2O + 4 H(+). It carries out the reaction a 14alpha-methyl steroid + reduced [NADPH--hemoprotein reductase] + O2 = a 14alpha-hydroxymethyl steroid + oxidized [NADPH--hemoprotein reductase] + H2O + H(+). The enzyme catalyses a 14alpha-hydroxymethyl steroid + reduced [NADPH--hemoprotein reductase] + O2 = a 14alpha-formyl steroid + oxidized [NADPH--hemoprotein reductase] + 2 H2O + H(+). The catalysed reaction is a 14alpha-formyl steroid + reduced [NADPH--hemoprotein reductase] + O2 = a Delta(14) steroid + formate + oxidized [NADPH--hemoprotein reductase] + H2O + 2 H(+). It catalyses the reaction lanosterol + 3 reduced [NADPH--hemoprotein reductase] + 3 O2 = 4,4-dimethyl-5alpha-cholesta-8,14,24-trien-3beta-ol + formate + 3 oxidized [NADPH--hemoprotein reductase] + 4 H2O + 4 H(+). It carries out the reaction lanosterol + reduced [NADPH--hemoprotein reductase] + O2 = 32-hydroxylanosterol + oxidized [NADPH--hemoprotein reductase] + H2O + H(+). The enzyme catalyses 32-hydroxylanosterol + reduced [NADPH--hemoprotein reductase] + O2 = 32-oxolanosterol + oxidized [NADPH--hemoprotein reductase] + 2 H2O + H(+). The catalysed reaction is 32-oxolanosterol + reduced [NADPH--hemoprotein reductase] + O2 = 4,4-dimethyl-5alpha-cholesta-8,14,24-trien-3beta-ol + formate + oxidized [NADPH--hemoprotein reductase] + H2O + 2 H(+). It catalyses the reaction eburicol + 3 reduced [NADPH--hemoprotein reductase] + 3 O2 = 14-demethyleburicol + formate + 3 oxidized [NADPH--hemoprotein reductase] + 4 H2O + 4 H(+). It carries out the reaction eburicol + reduced [NADPH--hemoprotein reductase] + O2 = 32-hydroxyeburicol + oxidized [NADPH--hemoprotein reductase] + H2O + H(+). The enzyme catalyses 32-hydroxyeburicol + reduced [NADPH--hemoprotein reductase] + O2 = 32-oxoeburicol + oxidized [NADPH--hemoprotein reductase] + 2 H2O + H(+). The catalysed reaction is 32-oxoeburicol + reduced [NADPH--hemoprotein reductase] + O2 = 14-demethyleburicol + formate + oxidized [NADPH--hemoprotein reductase] + H2O + 2 H(+). Its pathway is steroid biosynthesis; sterol biosynthesis. Its function is as follows. Sterol 14-alpha demethylase; part of the gene cluster that mediates the biosynthesis of tetrahydropyranyl antifungal agent lanomycin that acts as an inhibitor of CYP51 and blocks the ergosterol biosynthesis. Sterol 14-alpha-demethylase plays a critical role in the biosynthesis of ergosterol, the major sterol component in fungal membranes that participates in a variety of functions. Acts as a self-resistant CYP51 that contains mutations found in CYP51s isolated from azole resistance strains and that is not inhibited by the final product of the cluster, lanomycin. This Pyrenophora dematioidea (Helminthosporium dematioideum) protein is Sterol 14-alpha demethylase.